A 147-amino-acid polypeptide reads, in one-letter code: Small ribosomal subunit protein uS12 (147 aa).

This sequence belongs to the universal ribosomal protein uS12 family. Part of the 30S ribosomal subunit.

With S4 and S5 plays an important role in translational accuracy. Located at the interface of the 30S and 50S subunits. This Pyrobaculum islandicum (strain DSM 4184 / JCM 9189 / GEO3) protein is Small ribosomal subunit protein uS12.